A 217-amino-acid polypeptide reads, in one-letter code: Octanoyltransferase (217 aa).

The BPL/LPL catalytic domain occupies 35 to 214 (DEAGERIWLL…TLPAFLDKLR (180 aa)). Substrate is bound by residues 73 to 80 (RGGRYTYH), 145 to 147 (AIG), and 158 to 160 (GFS). Cys-176 serves as the catalytic Acyl-thioester intermediate.

The protein belongs to the LipB family.

The protein localises to the cytoplasm. The enzyme catalyses octanoyl-[ACP] + L-lysyl-[protein] = N(6)-octanoyl-L-lysyl-[protein] + holo-[ACP] + H(+). Its pathway is protein modification; protein lipoylation via endogenous pathway; protein N(6)-(lipoyl)lysine from octanoyl-[acyl-carrier-protein]: step 1/2. Its function is as follows. Catalyzes the transfer of endogenously produced octanoic acid from octanoyl-acyl-carrier-protein onto the lipoyl domains of lipoate-dependent enzymes. Lipoyl-ACP can also act as a substrate although octanoyl-ACP is likely to be the physiological substrate. The protein is Octanoyltransferase of Sphingopyxis alaskensis (strain DSM 13593 / LMG 18877 / RB2256) (Sphingomonas alaskensis).